The sequence spans 186 residues: Ribosome-recycling factor (186 aa).

This sequence belongs to the RRF family.

It is found in the cytoplasm. In terms of biological role, responsible for the release of ribosomes from messenger RNA at the termination of protein biosynthesis. May increase the efficiency of translation by recycling ribosomes from one round of translation to another. The protein is Ribosome-recycling factor of Burkholderia lata (strain ATCC 17760 / DSM 23089 / LMG 22485 / NCIMB 9086 / R18194 / 383).